Consider the following 343-residue polypeptide: Ferredoxin--NADP reductase (343 aa).

Residues D31, K39, Y43, V83, I118, D285, and S326 each coordinate FAD.

Belongs to the ferredoxin--NADP reductase type 2 family. In terms of assembly, homodimer. FAD is required as a cofactor.

The catalysed reaction is 2 reduced [2Fe-2S]-[ferredoxin] + NADP(+) + H(+) = 2 oxidized [2Fe-2S]-[ferredoxin] + NADPH. This is Ferredoxin--NADP reductase from Staphylococcus saprophyticus subsp. saprophyticus (strain ATCC 15305 / DSM 20229 / NCIMB 8711 / NCTC 7292 / S-41).